Consider the following 62-residue polypeptide: Ferredoxin-1 (62 aa).

4Fe-4S ferredoxin-type domains lie at Ala2 to Ser28 and Glu29 to Gly62. 8 residues coordinate [4Fe-4S] cluster: Cys9, Cys12, Cys15, Cys19, Cys38, Cys41, Cys50, and Cys54.

[4Fe-4S] cluster serves as cofactor.

Ferredoxins are iron-sulfur proteins that transfer electrons in a wide variety of metabolic reactions. The protein is Ferredoxin-1 of Chlorobaculum tepidum (strain ATCC 49652 / DSM 12025 / NBRC 103806 / TLS) (Chlorobium tepidum).